Reading from the N-terminus, the 189-residue chain is Large ribosomal subunit protein eL18 (189 aa).

The protein belongs to the eukaryotic ribosomal protein eL18 family.

The protein resides in the cytoplasm. This Anopheles gambiae (African malaria mosquito) protein is Large ribosomal subunit protein eL18 (RpL18).